The primary structure comprises 184 residues: J-type co-chaperone JAC1, mitochondrial (184 aa).

Residues 1–10 (MLKYLVQRRF) constitute a mitochondrion transit peptide. The 70-residue stretch at 13-82 (TFYELFPKTF…LRRSQYMLKL (70 aa)) folds into the J domain. The HSP70 binding motif lies at 48-50 (HPD). The segment at 71 to 184 (DPLRRSQYML…APGKQLEMNH (114 aa)) is interaction with ISU1.

It belongs to the HscB family. As to quaternary structure, interacts with ISU1 and SSQ1.

It is found in the mitochondrion matrix. Its function is as follows. Co-chaperone required for the assembly of iron-sulfur (Fe/S) clusters in mitochondria. Stimulates the ATPase activity of its specialized Hsp70 chaperone partner SSQ1, to mediate the transfer of iron-sulfur clusters from ISU1 to GRX5. Binds to the substrate protein ISU1 and targets it to SSQ1. This Saccharomyces cerevisiae (strain ATCC 204508 / S288c) (Baker's yeast) protein is J-type co-chaperone JAC1, mitochondrial.